Consider the following 229-residue polypeptide: uncharacterized protein (229 aa).

A disordered region spans residues 1-41 (MRSAKVGVARQLETKKPQTGRKISTSSRGTIHSQQSQPEDI). Over residues 21-39 (RKISTSSRGTIHSQQSQPE) the composition is skewed to polar residues. 4 EF-hand domains span residues 48–83 (KELKEYRQLFNMFDTDGSGAIGNEELKQAMISIGLH), 84–119 (ANKAEIDNVIKEVDADGNGEIDFEEFCACMKKSQNI), 123–158 (TNEELIRECFEIFDQDRNGIITENEFKYIAKEFGDF), and 159–193 (DDELAEKVFRELDVSANGHLSADQFATIVEDYLLN). Aspartate 61, aspartate 63, serine 65, glutamate 72, aspartate 97, aspartate 99, asparagine 101, glutamate 103, glutamate 108, aspartate 136, aspartate 138, asparagine 140, and glutamate 147 together coordinate Ca(2+). Residues 194-217 (DPKHDIDTGDSDVERYDDRHDDRA) are compositionally biased toward basic and acidic residues. The interval 194–229 (DPKHDIDTGDSDVERYDDRHDDRASPMPNHLSTVPE) is disordered.

This is an uncharacterized protein from Caenorhabditis elegans.